The primary structure comprises 361 residues: Putative dual-specificity RNA methyltransferase RlmN (361 aa).

E91 functions as the Proton acceptor in the catalytic mechanism. A Radical SAM core domain is found at 97 to 329 (QHYGLSVCVT…KKKGVNCVVR (233 aa)). C111, C115, and C118 together coordinate [4Fe-4S] cluster. S-adenosyl-L-methionine-binding positions include 163–164 (GE), S195, 218–220 (SLH), and T296.

The protein belongs to the radical SAM superfamily. RlmN family. Requires [4Fe-4S] cluster as cofactor.

It localises to the cytoplasm. The enzyme catalyses adenosine(2503) in 23S rRNA + 2 reduced [2Fe-2S]-[ferredoxin] + 2 S-adenosyl-L-methionine = 2-methyladenosine(2503) in 23S rRNA + 5'-deoxyadenosine + L-methionine + 2 oxidized [2Fe-2S]-[ferredoxin] + S-adenosyl-L-homocysteine. The catalysed reaction is adenosine(37) in tRNA + 2 reduced [2Fe-2S]-[ferredoxin] + 2 S-adenosyl-L-methionine = 2-methyladenosine(37) in tRNA + 5'-deoxyadenosine + L-methionine + 2 oxidized [2Fe-2S]-[ferredoxin] + S-adenosyl-L-homocysteine. Specifically methylates position 2 of adenine 2503 in 23S rRNA and position 2 of adenine 37 in tRNAs. In Streptococcus pneumoniae (strain CGSP14), this protein is Putative dual-specificity RNA methyltransferase RlmN.